The sequence spans 111 residues: Magnetosome protein MamF (111 aa).

Residues 1-17 (MAETILIETKTAGGNCR) lie on the Cytoplasmic side of the membrane. The chain crosses the membrane as a helical span at residues 18–38 (SYLMAGASYLGILCFVPLLMS). The Lumenal portion of the chain corresponds to 39 to 50 (RDDEYVYFHAKQ). The helical transmembrane segment at 51-71 (GLVLWMWSILAMFALHLPGIG) threads the bilayer. K72 is a topological domain (cytoplasmic). A helical membrane pass occupies residues 73-93 (WLFGFSSMGVLMLSVVGLVSV). Over 94–111 (ALRRTWRLPLISHVVALI) the chain is Lumenal.

It belongs to the magnetosome MamF/MmsF protein family. In terms of assembly, may form homooligomers. In terms of processing, subject to cleavage or degradation; identified by N-terminal sequencing of proteins that are about 103, 92 and 15 kDa in size.

It is found in the magnetosome membrane. In terms of biological role, plays a role in regulating magnetite crystal size; partially redundant function with MmsF. This Magnetospirillum gryphiswaldense (strain DSM 6361 / JCM 21280 / NBRC 15271 / MSR-1) protein is Magnetosome protein MamF.